The sequence spans 434 residues: Probable phosphoglucosamine mutase (434 aa).

Catalysis depends on Ser91, which acts as the Phosphoserine intermediate. Mg(2+)-binding residues include Ser91, Asp229, Asp231, and Asp233. Residue Ser91 is modified to Phosphoserine.

The protein belongs to the phosphohexose mutase family. Requires Mg(2+) as cofactor. Post-translationally, activated by phosphorylation.

It catalyses the reaction alpha-D-glucosamine 1-phosphate = D-glucosamine 6-phosphate. Catalyzes the conversion of glucosamine-6-phosphate to glucosamine-1-phosphate. This Methanosarcina barkeri (strain Fusaro / DSM 804) protein is Probable phosphoglucosamine mutase.